Reading from the N-terminus, the 882-residue chain is DNA mismatch repair protein MutS (882 aa).

Gly627–Ser634 contacts ATP.

The protein belongs to the DNA mismatch repair MutS family.

Its function is as follows. This protein is involved in the repair of mismatches in DNA. It is possible that it carries out the mismatch recognition step. This protein has a weak ATPase activity. The chain is DNA mismatch repair protein MutS from Anaeromyxobacter sp. (strain K).